We begin with the raw amino-acid sequence, 322 residues long: Quinolinate synthase (322 aa).

Positions 36 and 53 each coordinate iminosuccinate. Cys98 provides a ligand contact to [4Fe-4S] cluster. Iminosuccinate-binding positions include Tyr124–Asn126 and Ser141. Residue Cys184 participates in [4Fe-4S] cluster binding. Iminosuccinate-binding positions include His210–Glu212 and Thr227. Cys278 serves as a coordination point for [4Fe-4S] cluster.

It belongs to the quinolinate synthase family. Type 2 subfamily. The cofactor is [4Fe-4S] cluster.

Its subcellular location is the cytoplasm. It carries out the reaction iminosuccinate + dihydroxyacetone phosphate = quinolinate + phosphate + 2 H2O + H(+). Its pathway is cofactor biosynthesis; NAD(+) biosynthesis; quinolinate from iminoaspartate: step 1/1. In terms of biological role, catalyzes the condensation of iminoaspartate with dihydroxyacetone phosphate to form quinolinate. The protein is Quinolinate synthase of Chloroherpeton thalassium (strain ATCC 35110 / GB-78).